The sequence spans 70 residues: Small ribosomal subunit protein bS21 (70 aa).

It belongs to the bacterial ribosomal protein bS21 family.

This is Small ribosomal subunit protein bS21 from Nitratidesulfovibrio vulgaris (strain ATCC 29579 / DSM 644 / CCUG 34227 / NCIMB 8303 / VKM B-1760 / Hildenborough) (Desulfovibrio vulgaris).